The chain runs to 1278 residues: NPC intracellular cholesterol transporter 1 (1278 aa).

An N-terminal signal peptide occupies residues 1 to 22; the sequence is MTARGLALGLLLLLLCPAQVFS. The Lumenal segment spans residues 23-261; the sequence is QSCVWYGECG…QPPPPPAPWT (239 aa). 9 disulfide bridges follow: Cys25/Cys74, Cys31/Cys42, Cys63/Cys109, Cys75/Cys113, Cys97/Cys238, Cys100/Cys160, Cys177/Cys184, Cys227/Cys243, and Cys240/Cys247. Asn41 contacts cholesterol. A glycan (N-linked (GlcNAc...) asparagine) is linked at Asn70. A cholesterol-binding site is contributed by Gln79. N-linked (GlcNAc...) asparagine glycosylation is found at Asn122 and Asn135. The N-linked (GlcNAc...) asparagine; atypical glycan is linked to Asn158. An important for cholesterol binding and cholesterol transfer from NPC1 to liposomes region spans residues 175 to 205; sequence LLCGKDADACNATNWIEYMFNKDNGQAPFTI. Residues Asn185 and Asn222 are each glycosylated (N-linked (GlcNAc...) asparagine). The chain crosses the membrane as a helical span at residues 262-282; it reads ILGLDAMYVIMWITYMAFLLV. The Cytoplasmic portion of the chain corresponds to 283 to 350; the sequence is FFGAFFAVWC…RWGSFCVRNP (68 aa). A helical membrane pass occupies residues 351-371; that stretch reads GCVIFFSLVFITACSSGLVFV. At 372–620 the chain is on the lumenal side; sequence RVTTNPVDLW…DELNRESDSD (249 aa). Asn452, Asn459, Asn478, Asn524, Asn557, Asn572, and Asn598 each carry an N-linked (GlcNAc...) asparagine glycan. 2 disulfide bridges follow: Cys468-Cys479 and Cys516-Cys533. In terms of domain architecture, SSD spans 620-785; it reads DVFTVVISYA…ITCFVSLLGL (166 aa). The chain crosses the membrane as a helical span at residues 621 to 641; that stretch reads VFTVVISYAIMFLYISLALGH. The Cytoplasmic portion of the chain corresponds to 642–653; sequence MKSCRRLLVDSK. A helical transmembrane segment spans residues 654–675; it reads VSLGIAGILIVLSSVACSLGVF. Topologically, residues 676–685 are lumenal; that stretch reads SYIGLPLTLI. The chain crosses the membrane as a helical span at residues 686–706; that stretch reads VIEVIPFLVLAVGVDNIFILV. Topologically, residues 707 to 730 are cytoplasmic; it reads QAYQRDERLQGETLDQQLGRVLGE. The chain crosses the membrane as a helical span at residues 731–751; sequence VAPSMFLSSFSETVAFFLGAL. Over 752-759 the chain is Lumenal; it reads SVMPAVHT. Residues 760 to 783 form a helical membrane-spanning segment; the sequence is FSLFAGLAVFIDFLLQITCFVSLL. Over 784–832 the chain is Cytoplasmic; it reads GLDIKRQEKNRLDIFCCVRGAEDGTSVQASESCLFRFFKNSYSPLLLKD. A helical transmembrane segment spans residues 833–853; that stretch reads WMRPIVIAIFVGVLSFSIAVL. Topologically, residues 854-1097 are lumenal; it reads NKVDIGLDQS…YEQYLTIIDD (244 aa). Cys909 and Cys914 are oxidised to a cystine. N-linked (GlcNAc...) asparagine glycans are attached at residues Asn916, Asn931, Asn961, Asn968, Asn1064, and Asn1072. Intrachain disulfides connect Cys956-Cys1011, Cys957-Cys979, and Cys967-Cys976. The chain crosses the membrane as a helical span at residues 1098 to 1118; sequence TIFNLGVSLGAIFLVTMVLLG. Topologically, residues 1119 to 1124 are cytoplasmic; that stretch reads CELWSA. Residues 1125–1145 form a helical membrane-spanning segment; it reads VIMCATIAMVLVNMFGVMWLW. At 1146-1150 the chain is on the lumenal side; it reads GISLN. Residues 1151–1171 form a helical membrane-spanning segment; the sequence is AVSLVNLVMSCGISVEFCSHI. Topologically, residues 1172 to 1194 are cytoplasmic; it reads TRAFTVSMKGSRVERAEEALAHM. A helical membrane pass occupies residues 1195–1215; it reads GSSVFSGITLTKFGGIVVLAF. Topologically, residues 1216 to 1223 are lumenal; the sequence is AKSQIFQI. Residues 1224-1244 form a helical membrane-spanning segment; the sequence is FYFRMYLAMVLLGATHGLIFL. Residues 1245–1278 lie on the Cytoplasmic side of the membrane; the sequence is PVLLSYIGPSVNKAKSCATEERYKGTERERLLNF. Positions 1275 to 1278 are required for location in lysosomes; sequence LLNF. A Di-leucine motif motif is present at residues 1275–1278; that stretch reads LLNF.

The protein belongs to the patched family. Interacts (via the second lumenal domain) with NPC2. Interacts with TMEM97; the interaction may decrease NPC1 availability to the cell. Interacts with TIM1. Interacts with SLC38A9; this interaction inhibits cholesterol-mediated mTORC1 activation via its sterol transport activity. As to quaternary structure, (Microbial infection) Interacts with ebolavirus glycoprotein. In terms of processing, N-glycosylated.

It localises to the late endosome membrane. Its subcellular location is the lysosome membrane. It catalyses the reaction cholesterol(in) = cholesterol(out). Functionally, intracellular cholesterol transporter which acts in concert with NPC2 and plays an important role in the egress of cholesterol from the endosomal/lysosomal compartment. Unesterified cholesterol that has been released from LDLs in the lumen of the late endosomes/lysosomes is transferred by NPC2 to the cholesterol-binding pocket in the N-terminal domain of NPC1. Cholesterol binds to NPC1 with the hydroxyl group buried in the binding pocket. Binds oxysterol with higher affinity than cholesterol. May play a role in vesicular trafficking in glia, a process that may be crucial for maintaining the structural and functional integrity of nerve terminals. Inhibits cholesterol-mediated mTORC1 activation throught its interaction with SLC38A9. Its function is as follows. (Microbial infection) Acts as an endosomal entry receptor for ebolavirus. This Homo sapiens (Human) protein is NPC intracellular cholesterol transporter 1.